We begin with the raw amino-acid sequence, 445 residues long: MATASQIRLRPRLGVARATDTNPDGALEAANRLLQKNHNEHHMFWRSVAGHNHVAHSVLNTLALGGGPGDLQRAFDDGAEIQVPIPPMDRDAAASLSTPDQFRARMGSLEQYPNFLVFFTKEIETRGYPAVVIEYCFSGTSIAESMFANLFEGLYHPLIHLALGIEFDQPSIVAEGLAQAACHDSMNIEPFLFGTDKLAKTQDAPIDLNTPLLSLFHAVRDNEVLRAAAHRDHGDGVARVRDGILGRAREEISLIAARFRVDVDELDHRAAEMISCAAYLAGSAQRPGKARKIDFFHLHAVTASLGLIVLLQQPWVTPEQKARLIEWKARVDLVWYAASGAVELRRKDIVDYRPRHGLTWDSLYQAVRRVHDDGHLAKFIRALKAGEQISRPFEQGKRAEAFPIKGSMWLRIAQMAYDSSAGRPIEEKWIWGAGFEPNWATVPAV.

This sequence belongs to the questin oxidase family. NADPH serves as cofactor. As to expression, specifically expressed in conidia.

The protein operates within secondary metabolite biosynthesis. Questin oxidase; part of the gene cluster that mediates the biosynthesis of trypacidin, a mycotoxin with antiprotozoal activity and that plays a role in the infection process. The pathway begins with the synthesis of atrochrysone thioester by the polyketide synthase (PKS) tpcC. The atrochrysone carboxyl ACP thioesterase tpcB then breaks the thioester bond and releases the atrochrysone carboxylic acid from tpcC. The decarboxylase tpcK converts atrochrysone carboxylic acid to atrochrysone which is further reduced into emodin anthrone. The next step is performed by the emodin anthrone oxygenase tpcL that catalyzes the oxidation of emodinanthrone to emodin. Emodin O-methyltransferase encoded by tpcA catalyzes methylation of the 8-hydroxy group of emodin to form questin. Ring cleavage of questin by questin oxidase tpcI leads to desmethylsulochrin via several intermediates including questin epoxide. Another methylation step catalyzed by tpcM leads to the formation of sulochrin which is further converted to monomethylsulfochrin by tpcH. Finally, the tpcJ catalyzes the conversion of monomethylsulfochrin to trypacidin. Trypacidin is toxic for human pulmonary and bronchial epithelial cells by initiating the intracellular formation of nitric oxide (NO) and hydrogen peroxide (H(2)O(2)), thus triggering host necrotic cell death. The trypacidin pathway is also able to produce endocrocin via a distinct route from the endocrocin Enc pathway. The chain is Questin oxidase from Aspergillus fumigatus (strain ATCC MYA-4609 / CBS 101355 / FGSC A1100 / Af293) (Neosartorya fumigata).